The chain runs to 261 residues: Carbonic anhydrase 1 (261 aa).

N-acetylalanine is present on alanine 2. One can recognise an Alpha-carbonic anhydrase domain in the interval 4–261 (PDWGYDDKNG…LKGRTVRASF (258 aa)). Residue histidine 65 is the Proton donor/acceptor of the active site. Zn(2+)-binding residues include histidine 95, histidine 97, and histidine 120. Substrate-binding positions include threonine 200 and 200 to 201 (TH). Residues 235-261 (EGDNPVPSQRNNRPTQPLKGRTVRASF) are disordered. A compositionally biased stretch (polar residues) spans 240–249 (VPSQRNNRPT).

Belongs to the alpha-carbonic anhydrase family. The cofactor is Zn(2+).

Its subcellular location is the cytoplasm. It catalyses the reaction hydrogencarbonate + H(+) = CO2 + H2O. It carries out the reaction urea = cyanamide + H2O. With respect to regulation, inhibited by acetazolamide. Catalyzes the reversible hydration of carbon dioxide. Can hydrate cyanamide to urea. The protein is Carbonic anhydrase 1 (CA1) of Macaca nemestrina (Pig-tailed macaque).